A 119-amino-acid polypeptide reads, in one-letter code: MADPANDRSEREEGGEDDETPPASDGNPSPSANSFTLSNAQTRAREAAQDLLEHQFEGMIKAESNDEGWRTVVEVVERNAVPDTQDIIGRYEITLDGTGDVTGYELLERYRRGDMKEEL.

The segment covering 1–12 (MADPANDRSERE) has biased composition (basic and acidic residues). Residues 1–48 (MADPANDRSEREEGGEDDETPPASDGNPSPSANSFTLSNAQTRAREAA) are disordered. The segment covering 26 to 42 (GNPSPSANSFTLSNAQT) has biased composition (polar residues).

This sequence belongs to the gas vesicle GvpO family. In terms of assembly, forms homodimers, forms a GvpN1-GvpO1 heterodimer, interacts with GvpC1 (via the latter's C-terminus), GvpF1, GvpI1 and GvpL1, might interact with GvpA1.

The protein resides in the gas vesicle. The protein localises to the cytoplasm. Its function is as follows. A minor component of the gas vesicle, also found in soluble extracts. May play a role in transcription and/or RNA stability and in GV assembly. Gas vesicles are hollow, gas filled proteinaceous nanostructures found in several microbial planktonic microorganisms. They allow positioning of halobacteria at the optimal depth for growth in the poorly aerated, shallow brine pools of their habitat. In terms of biological role, expression of a 9.5 kb p-vac DNA fragment containing 2 divergently transcribed regions (gvpD-gvpE-gvpF-gvpG-gvpH-gvpI-gvpJ-gvpK-gvpL-gvpM and gvpA-gvpC-gvpN-gvpO) allows H.volcanii to produce gas vesicles. A minimal gas vesicle can be made in H.volcanii by gvpA1-gvpO1 gvpF1-gvpG1-gvpJ1-gvpK1-gvpL1-gvpM1; lack of enough GvpJ1 prevents formation. The same region restores gas vesicle production in H.halobium without the p-vac locus, but it still has the c-vac locus. This is Gas vesicle protein O1 from Halobacterium salinarum (strain ATCC 700922 / JCM 11081 / NRC-1) (Halobacterium halobium).